Here is a 310-residue protein sequence, read N- to C-terminus: 17-beta-hydroxysteroid dehydrogenase type 3 (310 aa).

48–77 (GQWAVITGAGDGIGKAYSFELAKRGLNVVL) is a binding site for NADP(+). Substrate is bound at residue S185. Y198 acts as the Proton acceptor in catalysis.

Belongs to the short-chain dehydrogenases/reductases (SDR) family. 17-beta-HSD 3 subfamily. Testis.

It is found in the endoplasmic reticulum. It catalyses the reaction a 17beta-hydroxy steroid + NADP(+) = a 17-oxo steroid + NADPH + H(+). The catalysed reaction is testosterone + NADP(+) = androst-4-ene-3,17-dione + NADPH + H(+). The enzyme catalyses 17beta-estradiol + NADP(+) = estrone + NADPH + H(+). It carries out the reaction 3beta-hydroxyandrost-5-en-17-one + NADPH + H(+) = androst-5-en-3beta,17beta-diol + NADP(+). It catalyses the reaction 17beta-hydroxy-5alpha-androstan-3-one + NADP(+) = 5alpha-androstan-3,17-dione + NADPH + H(+). The catalysed reaction is androsterone + NADPH + H(+) = 5alpha-androstane-3alpha,17beta-diol + NADP(+). The enzyme catalyses 3beta-hydroxy-5alpha-androstan-17-one + NADPH + H(+) = 5alpha-androstane-3beta,17beta-diol + NADP(+). It carries out the reaction androst-4-ene-3,11,17-trione + NADPH + H(+) = 17beta-hydroxyandrost-4-ene-3,11-dione + NADP(+). It catalyses the reaction 11beta-hydroxyandrost-4-ene-3,17-dione + NADPH + H(+) = 11beta,17beta-dihydroxyandrost-4-ene-3-one + NADP(+). It functions in the pathway hormone biosynthesis; testosterone biosynthesis. It participates in steroid metabolism. Catalyzes the conversion of 17-oxosteroids to 17beta-hydroxysteroids. Favors the reduction of androstenedione to testosterone. Testosterone is the key androgen driving male development and function. Uses NADPH while the two other EDH17B enzymes use NADH. Androgens such as epiandrosterone, dehydroepiandrosterone, androsterone and androstanedione are accepted as substrates and reduced at C-17. Can reduce 11-ketoandrostenedione as well as 11beta-hydroxyandrostenedione at C-17 to the respective testosterone forms. The polypeptide is 17-beta-hydroxysteroid dehydrogenase type 3 (Homo sapiens (Human)).